We begin with the raw amino-acid sequence, 667 residues long: Threonine--tRNA ligase (667 aa).

A TGS domain is found at 1-64 (MSEAISLTFP…TDGKIEIVTR (64 aa)). The tract at residues 245–553 (DHRRLGREMD…LIENFAGHMP (309 aa)) is catalytic. Residues C347, H398, and H530 each coordinate Zn(2+).

This sequence belongs to the class-II aminoacyl-tRNA synthetase family. In terms of assembly, homodimer. Zn(2+) serves as cofactor.

The protein resides in the cytoplasm. The enzyme catalyses tRNA(Thr) + L-threonine + ATP = L-threonyl-tRNA(Thr) + AMP + diphosphate + H(+). In terms of biological role, catalyzes the attachment of threonine to tRNA(Thr) in a two-step reaction: L-threonine is first activated by ATP to form Thr-AMP and then transferred to the acceptor end of tRNA(Thr). Also edits incorrectly charged L-seryl-tRNA(Thr). The chain is Threonine--tRNA ligase from Agrobacterium fabrum (strain C58 / ATCC 33970) (Agrobacterium tumefaciens (strain C58)).